A 332-amino-acid polypeptide reads, in one-letter code: RING finger protein 225 (332 aa).

The tract at residues Met-1–Leu-55 is disordered. Residues Ser-15–Ser-27 are compositionally biased toward low complexity. Acidic residues predominate over residues Glu-36–Asp-46. The RING-type zinc-finger motif lies at Cys-63–Arg-111. The interval Gly-121–Leu-187 is disordered. Residues Ala-205–Ile-225 form a helical membrane-spanning segment. The disordered stretch occupies residues Thr-259–Gln-332. 2 stretches are compositionally biased toward basic and acidic residues: residues Ala-280 to Val-295 and Ala-323 to Gln-332.

The protein resides in the membrane. The protein is RING finger protein 225 of Mus musculus (Mouse).